The chain runs to 333 residues: MAKLYYEKDCNLEVLKGKKVAIIGYGSQGHAHALNLKNSGVDVVVGLYEGSKSWERAEAEGLKVAVASDAAAEADVVVILVNDEKQVQVYEESIKPNLTAGKYLMFAHGFNIHYGQIVPSEDVNVFMVAPKGPGHTVRSQYQEGKGVPCLVSVYQDATGNTMDVALAYAAGIGGARAGVLKTTFKEETETDLFGEQAVLCGGVTELMKVGFEVLVEAGYEPESAYFECVHEMKLIIDMVVEGGLGNMRQSISDTAEYGDYSVGKRIITDETKKEMKKVLHEVQDGTFARNWILENKANRPAFTARRRMEQSHQVEVVGKELRDMMSWSKQSKK.

A KARI N-terminal Rossmann domain is found at 2-182 (AKLYYEKDCN…GGARAGVLKT (181 aa)). NADP(+) is bound by residues 25 to 28 (YGSQ), S51, S53, and 83 to 86 (DEKQ). Residue H108 is part of the active site. Residue G134 coordinates NADP(+). In terms of domain architecture, KARI C-terminal knotted spans 183–328 (TFKEETETDL…KELRDMMSWS (146 aa)). Mg(2+) is bound by residues D191, E195, E227, and E231. Substrate is bound at residue S252.

Belongs to the ketol-acid reductoisomerase family. Mg(2+) is required as a cofactor.

The catalysed reaction is (2R)-2,3-dihydroxy-3-methylbutanoate + NADP(+) = (2S)-2-acetolactate + NADPH + H(+). The enzyme catalyses (2R,3R)-2,3-dihydroxy-3-methylpentanoate + NADP(+) = (S)-2-ethyl-2-hydroxy-3-oxobutanoate + NADPH + H(+). It participates in amino-acid biosynthesis; L-isoleucine biosynthesis; L-isoleucine from 2-oxobutanoate: step 2/4. It functions in the pathway amino-acid biosynthesis; L-valine biosynthesis; L-valine from pyruvate: step 2/4. Its function is as follows. Involved in the biosynthesis of branched-chain amino acids (BCAA). Catalyzes an alkyl-migration followed by a ketol-acid reduction of (S)-2-acetolactate (S2AL) to yield (R)-2,3-dihydroxy-isovalerate. In the isomerase reaction, S2AL is rearranged via a Mg-dependent methyl migration to produce 3-hydroxy-3-methyl-2-ketobutyrate (HMKB). In the reductase reaction, this 2-ketoacid undergoes a metal-dependent reduction by NADPH to yield (R)-2,3-dihydroxy-isovalerate. This chain is Ketol-acid reductoisomerase (NADP(+)), found in Alkaliphilus metalliredigens (strain QYMF).